A 210-amino-acid chain; its full sequence is UPF0173 protein PF0020 (210 aa).

This sequence belongs to the UPF0173 family.

In Pyrococcus furiosus (strain ATCC 43587 / DSM 3638 / JCM 8422 / Vc1), this protein is UPF0173 protein PF0020.